A 369-amino-acid chain; its full sequence is Anhydro-N-acetylmuramic acid kinase (369 aa).

Residue 12 to 19 (GTSMDGVD) participates in ATP binding.

It belongs to the anhydro-N-acetylmuramic acid kinase family.

It catalyses the reaction 1,6-anhydro-N-acetyl-beta-muramate + ATP + H2O = N-acetyl-D-muramate 6-phosphate + ADP + H(+). It functions in the pathway amino-sugar metabolism; 1,6-anhydro-N-acetylmuramate degradation. It participates in cell wall biogenesis; peptidoglycan recycling. Its function is as follows. Catalyzes the specific phosphorylation of 1,6-anhydro-N-acetylmuramic acid (anhMurNAc) with the simultaneous cleavage of the 1,6-anhydro ring, generating MurNAc-6-P. Is required for the utilization of anhMurNAc either imported from the medium or derived from its own cell wall murein, and thus plays a role in cell wall recycling. This is Anhydro-N-acetylmuramic acid kinase from Shewanella sp. (strain MR-4).